A 372-amino-acid chain; its full sequence is MAGGVMDKEYVGFAALPNQLHRKSVKKGFDFTLMVAGESGLGKSTLINSLFLTNLYEDRQVPEASARLTQTLAIERRGVEIEEGGVKVKLTLVDTPGFGDSVDCSDCWLPVVKFIEEQFEQYLRDESGLNRKNIQDSRVHCCLYFISPFGRGLRPLDVAFLRAVHEKVNIIPVIGKADALMPQETQALKQKIRDQLKEEEIHIYQFPECDSDEDEDFKRQDAEMKESIPFAVVGSCEVVRDGGNRPVRGRRYSWGTVEVENPHHCDFLNLRRMLVQTHLQDLKEVTHDLLYEGYRARCLQSLARPGARDRASRSKLSRQSATEIPLPMLPLADTEKLIREKDEELRRMQEMLEKMQAQMQQSQAQGEQSDAL.

A Septin-type G domain is found at 27–301 (KGFDFTLMVA…EGYRARCLQS (275 aa)). Residues 37-44 (GESGLGKS) are G1 motif. GTP is bound by residues 37 to 44 (GESGLGKS), threonine 71, glycine 97, and 176 to 184 (KADALMPQE). Residues 94 to 97 (DTPG) form a G3 motif region. The interval 175–178 (GKAD) is G4 motif. Serine 211 bears the Phosphoserine mark. GTP contacts are provided by glycine 234 and arginine 250. Serine 253 is modified (phosphoserine; by AURKB). Position 256 is a phosphothreonine (threonine 256). Phosphoserine; by AURKB occurs at positions 312 and 320. A disordered region spans residues 352-372 (LEKMQAQMQQSQAQGEQSDAL). Over residues 355-372 (MQAQMQQSQAQGEQSDAL) the composition is skewed to low complexity.

The protein belongs to the TRAFAC class TrmE-Era-EngA-EngB-Septin-like GTPase superfamily. Septin GTPase family. Septins polymerize into heterooligomeric protein complexes that form filaments, and can associate with cellular membranes, actin filaments and microtubules. GTPase activity is required for filament formation. Interacts with AURKB. In terms of tissue distribution, expressed at high levels in lymphoid and hematopoietic tissues.

Its subcellular location is the cytoplasm. It localises to the cytoskeleton. The protein localises to the microtubule organizing center. It is found in the centrosome. The protein resides in the midbody. Filament-forming cytoskeletal GTPase. May play a role in cytokinesis (Potential). This chain is Septin-1, found in Homo sapiens (Human).